Consider the following 118-residue polypeptide: Diacylglycerol kinase (118 aa).

Residue Glu28 participates in a divalent metal cation binding. Transmembrane regions (helical) follow at residues 29-49 (TAFR…FFLG) and 55-75 (IILM…NSAV). The active-site Proton acceptor is Glu69. Glu76 is a binding site for a divalent metal cation. The helical transmembrane segment at 98–118 (SASVFIALCIVGIVWGGILFF) threads the bilayer.

The protein belongs to the bacterial diacylglycerol kinase family. Mg(2+) serves as cofactor.

The protein localises to the cell inner membrane. It catalyses the reaction a 1,2-diacyl-sn-glycerol + ATP = a 1,2-diacyl-sn-glycero-3-phosphate + ADP + H(+). In terms of biological role, catalyzes the ATP-dependent phosphorylation of sn-l,2-diacylglycerol (DAG) to phosphatidic acid. Involved in the recycling of diacylglycerol produced as a by-product during membrane-derived oligosaccharide (MDO) biosynthesis. This Haemophilus influenzae (strain ATCC 51907 / DSM 11121 / KW20 / Rd) protein is Diacylglycerol kinase (dgkA).